Here is a 128-residue protein sequence, read N- to C-terminus: Small ribosomal subunit protein uS11 (128 aa).

The protein belongs to the universal ribosomal protein uS11 family. Part of the 30S ribosomal subunit. Interacts with proteins S7 and S18. Binds to IF-3.

Located on the platform of the 30S subunit, it bridges several disparate RNA helices of the 16S rRNA. Forms part of the Shine-Dalgarno cleft in the 70S ribosome. This is Small ribosomal subunit protein uS11 from Chloroherpeton thalassium (strain ATCC 35110 / GB-78).